A 743-amino-acid polypeptide reads, in one-letter code: Catalase-peroxidase (743 aa).

Polar residues predominate over residues 1-15; that stretch reads MSSDSRPPQPDTSTQ. Residues 1 to 40 are disordered; it reads MSSDSRPPQPDTSTQSNSESESPAISSPTPQDHAPMTNRD. Low complexity predominate over residues 16-28; that stretch reads SNSESESPAISSP. Residues 110-233 constitute a cross-link (tryptophyl-tyrosyl-methioninium (Trp-Tyr) (with M-259)); sequence WHAAGTYRIQ…YGATTMGLIY (124 aa). His111 serves as the catalytic Proton acceptor. The segment at residues 233–259 is a cross-link (tryptophyl-tyrosyl-methioninium (Tyr-Met) (with W-110)); it reads YVNPEGPEGKPDPVAAAHDIRETFARM. His274 is a heme b binding site. The tract at residues 490-511 is disordered; sequence DKRGGANGGRLRLEPQKSWESN.

Belongs to the peroxidase family. Peroxidase/catalase subfamily. Homodimer or homotetramer. Heme b serves as cofactor. Formation of the three residue Trp-Tyr-Met cross-link is important for the catalase, but not the peroxidase activity of the enzyme.

It catalyses the reaction H2O2 + AH2 = A + 2 H2O. It carries out the reaction 2 H2O2 = O2 + 2 H2O. Functionally, bifunctional enzyme with both catalase and broad-spectrum peroxidase activity. The protein is Catalase-peroxidase of Mycobacterium ulcerans (strain Agy99).